A 358-amino-acid chain; its full sequence is tRNA(Ile)-lysidine synthase (358 aa).

Ser35 to Ser40 is a binding site for ATP.

Belongs to the tRNA(Ile)-lysidine synthase family.

It localises to the cytoplasm. The enzyme catalyses cytidine(34) in tRNA(Ile2) + L-lysine + ATP = lysidine(34) in tRNA(Ile2) + AMP + diphosphate + H(+). Its function is as follows. Ligates lysine onto the cytidine present at position 34 of the AUA codon-specific tRNA(Ile) that contains the anticodon CAU, in an ATP-dependent manner. Cytidine is converted to lysidine, thus changing the amino acid specificity of the tRNA from methionine to isoleucine. The polypeptide is tRNA(Ile)-lysidine synthase (Bradyrhizobium sp. (strain BTAi1 / ATCC BAA-1182)).